The sequence spans 158 residues: Ribonucleases P/MRP protein subunit POP6 (158 aa).

Residues 51-71 adopt a coiled-coil conformation; sequence KNDNIKKSVNKLDKQINMADR.

In terms of assembly, component of nuclear RNase P and RNase MRP complexes. RNase P consists of an RNA moiety and at least 9 protein subunits including POP1, POP3, POP4, POP5, POP6, POP7, POP8, RPP1 and RPR2. RNase MRP complex consists of an RNA moiety and at least 10 protein subunits including POP1, POP3, POP4, POP5, POP6, POP7, POP8, RMP1, RPP1 and SNM1, many of which are shared with the RNase P complex.

It is found in the nucleus. It carries out the reaction Endonucleolytic cleavage of RNA, removing 5'-extranucleotides from tRNA precursor.. In terms of biological role, component of ribonuclease P, a protein complex that generates mature tRNA molecules by cleaving their 5'-ends. Also a component of RNase MRP, which cleaves pre-rRNA sequences. The chain is Ribonucleases P/MRP protein subunit POP6 (POP6) from Saccharomyces cerevisiae (strain ATCC 204508 / S288c) (Baker's yeast).